The following is a 359-amino-acid chain: Biotin synthase (359 aa).

The disordered stretch occupies residues 1–23 (MSVADSSAADSVAAPDTADTSSS). The 227-residue stretch at 76-302 (YFGNTVQLYF…VNPDRELRIA (227 aa)) folds into the Radical SAM core domain. [4Fe-4S] cluster contacts are provided by Cys-94, Cys-98, and Cys-101. 4 residues coordinate [2Fe-2S] cluster: Cys-138, Cys-170, Cys-230, and Arg-300.

This sequence belongs to the radical SAM superfamily. Biotin synthase family. In terms of assembly, homodimer. Requires [4Fe-4S] cluster as cofactor. [2Fe-2S] cluster serves as cofactor.

The enzyme catalyses (4R,5S)-dethiobiotin + (sulfur carrier)-SH + 2 reduced [2Fe-2S]-[ferredoxin] + 2 S-adenosyl-L-methionine = (sulfur carrier)-H + biotin + 2 5'-deoxyadenosine + 2 L-methionine + 2 oxidized [2Fe-2S]-[ferredoxin]. Its pathway is cofactor biosynthesis; biotin biosynthesis; biotin from 7,8-diaminononanoate: step 2/2. Its function is as follows. Catalyzes the conversion of dethiobiotin (DTB) to biotin by the insertion of a sulfur atom into dethiobiotin via a radical-based mechanism. In Rhodopirellula baltica (strain DSM 10527 / NCIMB 13988 / SH1), this protein is Biotin synthase.